The primary structure comprises 40 residues: SDGRNDAAKAFDLISSTVKKGCCSHPACAGNNQHICGRRR.

Positions 1-20 are excised as a propeptide; that stretch reads SDGRNDAAKAFDLISSTVKK. 2 cysteine pairs are disulfide-bonded: C22-C28 and C23-C36. Residues 24–26 form a ser-Xaa-Pro motif, crucial for potent interaction with nAChR region; it reads SHP. Position 36 is a cysteine amide (C36).

Expressed by the venom duct.

Its subcellular location is the secreted. In terms of biological role, alpha-conotoxins bind to the nicotinic acetylcholine receptors (nAChR) and inhibit them. This toxin reversibly blocks neuronal nAChRs (alpha-3/beta-2 = alpha-6 or -3/beta-2 or -3 &gt; alpha-3/beta-4 = alpha-4/beta-2). The protein is Alpha-conotoxin GIC of Conus geographus (Geography cone).